Consider the following 526-residue polypeptide: Collagen alpha-2(I) chain (526 aa).

The disordered stretch occupies residues 1-291 (GFPGEKGPSG…PRSPPSLRPK (291 aa)). Low complexity-rich tracts occupy residues 9-36 (SGEA…LGLP), 44-81 (LPGV…NGAP), and 110-131 (YPGN…SVGP). Basic and acidic residues predominate over residues 165–176 (RGDKGEPGDKGP). Pro residues predominate over residues 249 to 261 (AGPPGPPGPPGPP). The propeptide at 263-526 (ASGGGYDFGY…YVDVGPVCFK (264 aa)) is C-terminal propeptide. One can recognise a Fibrillar collagen NC1 domain in the interval 293–526 (YEVDATLKSL…YVDVGPVCFK (234 aa)). Disulfide bonds link cysteine 323-cysteine 355, cysteine 363-cysteine 524, and cysteine 432-cysteine 477. Residues aspartate 341, asparagine 343, glutamine 344, cysteine 346, and aspartate 349 each contribute to the Ca(2+) site.

Belongs to the fibrillar collagen family. As to quaternary structure, trimers of one alpha 2(I) and two alpha 1(I) chains. Interacts (via C-terminus) with TMEM131 (via PapD-L domain); the interaction is direct and is involved in assembly and TRAPPIII ER-to-Golgi transport complex-dependent secretion of collagen. Prolines at the third position of the tripeptide repeating unit (G-X-Y) are hydroxylated in some or all of the chains. Forms the fibrils of tendon, ligaments and bones. In bones the fibrils are mineralized with calcium hydroxyapatite.

It localises to the secreted. The protein resides in the extracellular space. It is found in the extracellular matrix. In terms of biological role, type I collagen is a member of group I collagen (fibrillar forming collagen). This chain is Collagen alpha-2(I) chain (COL1A2), found in Oryctolagus cuniculus (Rabbit).